The chain runs to 232 residues: 7-cyano-7-deazaguanine synthase (232 aa).

Phe8 to Leu18 is a binding site for ATP. Cys187, Cys196, Cys199, and Cys202 together coordinate Zn(2+).

This sequence belongs to the QueC family. Zn(2+) is required as a cofactor.

The catalysed reaction is 7-carboxy-7-deazaguanine + NH4(+) + ATP = 7-cyano-7-deazaguanine + ADP + phosphate + H2O + H(+). The protein operates within purine metabolism; 7-cyano-7-deazaguanine biosynthesis. Functionally, catalyzes the ATP-dependent conversion of 7-carboxy-7-deazaguanine (CDG) to 7-cyano-7-deazaguanine (preQ(0)). This is 7-cyano-7-deazaguanine synthase from Photobacterium profundum (strain SS9).